A 217-amino-acid polypeptide reads, in one-letter code: Protein-methionine-sulfoxide reductase heme-binding subunit MsrQ (217 aa).

A run of 4 helical transmembrane segments spans residues 82 to 102, 118 to 138, 150 to 170, and 180 to 200; these read MLGLYTFFYGTLHFLIWLLVD, PFITVGFAAFVLMIPLAATST, WQWLHRLVYVTGVLGILHYWW, and EVSIYAAVMAVLLGLRVWWVW.

This sequence belongs to the MsrQ family. In terms of assembly, heterodimer of a catalytic subunit (MsrP) and a heme-binding subunit (MsrQ). FMN is required as a cofactor. It depends on heme b as a cofactor.

It localises to the cell inner membrane. Part of the MsrPQ system that repairs oxidized periplasmic proteins containing methionine sulfoxide residues (Met-O), using respiratory chain electrons. Thus protects these proteins from oxidative-stress damage caused by reactive species of oxygen and chlorine generated by the host defense mechanisms. MsrPQ is essential for the maintenance of envelope integrity under bleach stress, rescuing a wide series of structurally unrelated periplasmic proteins from methionine oxidation. MsrQ provides electrons for reduction to the reductase catalytic subunit MsrP, using the quinone pool of the respiratory chain. The sequence is that of Protein-methionine-sulfoxide reductase heme-binding subunit MsrQ from Ralstonia nicotianae (strain ATCC BAA-1114 / GMI1000) (Ralstonia solanacearum).